Here is a 410-residue protein sequence, read N- to C-terminus: Extracellular serine proteinase (410 aa).

The signal sequence occupies residues 1–19 (MKRGGLWLLLGLLVLSACS). The propeptide occupies 20-132 (SNPPAASTQE…IEADQEVRAF (113 aa)). Positions 45-130 (YIVVYKENAD…AYIEADQEVR (86 aa)) constitute an Inhibitor I9 domain. Residues 139-410 (TWGLDRIDQR…SPNLLLYTPF (272 aa)) form the Peptidase S8 domain. Active-site charge relay system residues include Asp171, His204, and Ser356.

It belongs to the peptidase S8 family. Contains 4 Cys residues that form two disulfide bonds. In terms of processing, glycosylated. This proteinase has a 0.7% carbohydrate content.

It is found in the secreted. Serine proteinase with preferred activity for amino acids with aromatic side groups at the P1' side of the scissible bond. The chain is Extracellular serine proteinase from Thermus sp. (strain Rt41A).